We begin with the raw amino-acid sequence, 300 residues long: 3-hydroxy-3-isohexenylglutaryl-CoA/hydroxy-methylglutaryl-CoA lyase (300 aa).

The 268-residue stretch at 7 to 274 (VRLVEVGPRD…HTGVDMHALV (268 aa)) folds into the Pyruvate carboxyltransferase domain. Arg-15 contacts substrate. A divalent metal cation-binding residues include Asp-16, His-207, and His-209. Cys-240 is an active-site residue. Asn-249 is a binding site for a divalent metal cation.

This sequence belongs to the HMG-CoA lyase family. As to quaternary structure, homodimer. Mg(2+) is required as a cofactor. The cofactor is Mn(2+).

It carries out the reaction 3-hydroxy-3-(4-methylpent-3-en-1-yl)glutaryl-CoA = 7-methyl-3-oxooct-6-enoyl-CoA + acetate. It catalyses the reaction (3S)-3-hydroxy-3-methylglutaryl-CoA = acetoacetate + acetyl-CoA. Its pathway is metabolic intermediate metabolism; (S)-3-hydroxy-3-methylglutaryl-CoA degradation; acetoacetate from (S)-3-hydroxy-3-methylglutaryl-CoA: step 1/1. In terms of biological role, involved in the L-leucine, isovalerate and acyclic monoterpene catabolism. Catalyzes the cleavage of 3-hydroxy-3-methylglutaryl-CoA (HMG-CoA) to yield acetyl-CoA and acetoacetate. It can also catalyze the cleavage of 3-hydroxy-3-isohexenylglutaryl-CoA (HIHG_CoA) to yield 7-methyl-3-oxooct-6-enoyl-CoA and acetate. The sequence is that of 3-hydroxy-3-isohexenylglutaryl-CoA/hydroxy-methylglutaryl-CoA lyase from Pseudomonas aeruginosa (strain ATCC 15692 / DSM 22644 / CIP 104116 / JCM 14847 / LMG 12228 / 1C / PRS 101 / PAO1).